A 283-amino-acid chain; its full sequence is 1-acyl-sn-glycerol-3-phosphate acyltransferase alpha (283 aa).

Residues 1-26 (MDLWPGAWMLLLLLFLLLLFLLPTLW) form the signal peptide. Residues 27–37 (FCSPSAKYFFK) are Lumenal-facing. Residues 38–58 (MAFYNGWILFLAVLAIPVCAV) traverse the membrane as a helical segment. The Cytoplasmic segment spans residues 59–127 (RGRNVENMKI…PGRCVPIAKR (69 aa)). The HXXXXD motif signature appears at 104-109 (HQSSLD). A helical membrane pass occupies residues 128–148 (ELLWAGSAGLACWLAGVIFID). Residues 149 to 283 (RKRTGDAISV…DYLKKPGGGG (135 aa)) lie on the Lumenal side of the membrane. Positions 178-181 (EGTR) match the EGTR motif motif.

The protein belongs to the 1-acyl-sn-glycerol-3-phosphate acyltransferase family. In terms of tissue distribution, widely expressed. Expressed in adipose tissue and at high levels in testis and pancreas. Expressed at lower levels in tissues such as heart, brain, placenta, kidney, lung, spleen, thymus, prostate, ovary, intestine, colon, leukocyte and liver.

The protein resides in the endoplasmic reticulum membrane. The enzyme catalyses a 1-acyl-sn-glycero-3-phosphate + an acyl-CoA = a 1,2-diacyl-sn-glycero-3-phosphate + CoA. It carries out the reaction 1-(9Z-octadecenoyl)-sn-glycero-3-phosphate + (9Z)-octadecenoyl-CoA = 1,2-di-(9Z-octadecenoyl)-sn-glycero-3-phosphate + CoA. It catalyses the reaction 1-(9Z-octadecenoyl)-sn-glycero-3-phosphate + hexadecanoyl-CoA = 1-(9Z)-octadecenoyl-2-hexadecanoyl-sn-glycero-3-phosphate + CoA. The catalysed reaction is heptadecanoyl-CoA + 1-(9Z-octadecenoyl)-sn-glycero-3-phosphate = 1-(9Z)-octadecenoyl-2-heptadecanoyl-sn-glycero-3-phosphate + CoA. The enzyme catalyses 1-(9Z-octadecenoyl)-sn-glycero-3-phosphate + octadecanoyl-CoA = 1-(9Z-octadecenoyl)-2-octadecanoyl-sn-glycero-3-phosphate + CoA. It carries out the reaction 1-(9Z-octadecenoyl)-sn-glycero-3-phosphate + (9Z,12Z)-octadecadienoyl-CoA = 1-(9Z)-octadecenoyl-2-(9Z,12Z)-octadecadienoyl-sn-glycero-3-phosphate + CoA. It catalyses the reaction 1-(9Z-octadecenoyl)-sn-glycero-3-phosphate + tetradecanoyl-CoA = 1-(9Z)-octadecenoyl-2-tetradecanoyl-sn-glycero-3-phosphate + CoA. The catalysed reaction is pentadecanoyl-CoA + 1-(9Z-octadecenoyl)-sn-glycero-3-phosphate = 1-(9Z)-octadecenoyl-2-pentadecanoyl-sn-glycero-3-phosphate + CoA. The enzyme catalyses 1-hexadecanoyl-sn-glycero-3-phosphate + (9Z)-octadecenoyl-CoA = 1-hexadecanoyl-2-(9Z-octadecenoyl)-sn-glycero-3-phosphate + CoA. It carries out the reaction 1-(9Z,12Z,15Z)-octadecatrienoyl-sn-glycero-3-phosphate + (9Z)-octadecenoyl-CoA = 1-(9Z,12Z,15Z)-octadecatrienoyl-2-(9Z)-octadecenoyl-sn-glycero-3-phosphate + CoA. It catalyses the reaction 1-(6Z,9Z,12Z-octadecatrienoyl)-sn-glycero-3-phosphate + (9Z)-octadecenoyl-CoA = (6Z,9Z,12Z)-octadecatrienoyl-2-(9Z)-octadecenoyl-sn-glycero-3-phosphate + CoA. The catalysed reaction is 1-eicosanoyl-sn-glycero-3-phosphate + (9Z)-octadecenoyl-CoA = 1-eicosanoyl-2-(9Z)-octadecenoyl-sn-glycero-3-phosphate + CoA. The enzyme catalyses 1-tetradecanoyl-sn-glycerol 3-phosphate + (9Z)-octadecenoyl-CoA = 1-tetradecanoyl-2-(9Z)-octadecenoyl-sn-glycero-3-phosphate + CoA. It carries out the reaction 1-(9Z-octadecenoyl)-sn-glycero-3-phosphate + (5Z,8Z,11Z,14Z)-eicosatetraenoyl-CoA = 1-(9Z)-octadecenoyl-2-(5Z,8Z,11Z,14Z)-eicosatetraenoyl-sn-glycero-3-phosphate + CoA. It catalyses the reaction 1-(9Z-octadecenoyl)-sn-glycero-3-phosphate + dodecanoyl-CoA = 1-(9Z)-octadecenoyl-2-dodecanoyl-sn-glycero-3-phosphate + CoA. The catalysed reaction is (6Z)-octadecenoyl-CoA + 1-(9Z-octadecenoyl)-sn-glycero-3-phosphate = 1-(9Z)-octadecenoyl-2-(6Z)-octadecenoyl-sn-glycero-3-phosphate + CoA. The enzyme catalyses (11Z)-octadecenoyl-CoA + 1-(9Z-octadecenoyl)-sn-glycero-3-phosphate = 1-(9Z)-octadecenoyl-2-(11Z)-octadecenoyl-sn-glycero-3-phosphate + CoA. It carries out the reaction (9Z)-hexadecenoyl-CoA + 1-(9Z-octadecenoyl)-sn-glycero-3-phosphate = 1-(9Z-octadecenoyl)-2-(9Z-hexadecenoyl)-sn-glycero-3-phosphate + CoA. Its pathway is phospholipid metabolism; CDP-diacylglycerol biosynthesis; CDP-diacylglycerol from sn-glycerol 3-phosphate: step 2/3. In terms of biological role, converts 1-acyl-sn-glycerol-3-phosphate (lysophosphatidic acid or LPA) into 1,2-diacyl-sn-glycerol-3-phosphate (phosphatidic acid or PA) by incorporating an acyl moiety at the sn-2 position of the glycerol backbone. The chain is 1-acyl-sn-glycerol-3-phosphate acyltransferase alpha (AGPAT1) from Homo sapiens (Human).